The primary structure comprises 21 residues: Fibrinogen beta chain (21 aa).

Pyrrolidone carboxylic acid is present on glutamine 1. Residue tyrosine 6 is modified to Sulfotyrosine.

Heterohexamer; disulfide linked. Contains 2 sets of 3 non-identical chains (alpha, beta and gamma). The 2 heterotrimers are in head to head conformation with the N-termini in a small central domain. Post-translationally, conversion of fibrinogen to fibrin is triggered by thrombin, which cleaves fibrinopeptides A and B from alpha and beta chains, and thus exposes the N-terminal polymerization sites responsible for the formation of the soft clot.

It is found in the secreted. In terms of biological role, cleaved by the protease thrombin to yield monomers which, together with fibrinogen alpha (FGA) and fibrinogen gamma (FGG), polymerize to form an insoluble fibrin matrix. Fibrin has a major function in hemostasis as one of the primary components of blood clots. In addition, functions during the early stages of wound repair to stabilize the lesion and guide cell migration during re-epithelialization. Was originally thought to be essential for platelet aggregation, based on in vitro studies using anticoagulated blood. However subsequent studies have shown that it is not absolutely required for thrombus formation in vivo. Enhances expression of SELP in activated platelets. Maternal fibrinogen is essential for successful pregnancy. Fibrin deposition is also associated with infection, where it protects against IFNG-mediated hemorrhage. May also facilitate the antibacterial immune response via both innate and T-cell mediated pathways. The polypeptide is Fibrinogen beta chain (FGB) (Rangifer tarandus (Reindeer)).